The primary structure comprises 430 residues: von Willebrand factor (430 aa).

N-linked (GlcNAc...) asparagine glycosylation is present at Asn6. A disulfide bridge links Cys9 with Cys12. 3 O-linked (GalNAc...) threonine glycosylation sites follow: Thr23, Thr30, and Thr31. An intrachain disulfide couples Cys47 to Cys233. Residues 52–228 (DLVFLLDGSY…DELEQRRDEI (177 aa)) enclose the VWFA 1; binding site for platelet glycoprotein Ib domain. Thr252 carries an O-linked (GalNAc...) threonine glycan. A glycan (O-linked (GalNAc...) serine) is linked at Ser261. Residues 273–430 (DVVFVLEASD…ITPIFIQDFE (158 aa)) enclose the VWFA 2 domain. 2 N-linked (GlcNAc...) asparagine glycosylation sites follow: Asn290 and Asn349.

As to quaternary structure, multimeric. Interacts with F8. Post-translationally, N- and O-glycosylated. As to expression, plasma.

It localises to the secreted. The protein resides in the extracellular space. The protein localises to the extracellular matrix. Functionally, important in the maintenance of hemostasis, it promotes adhesion of platelets to the sites of vascular injury by forming a molecular bridge between sub-endothelial collagen matrix and platelet-surface receptor complex GPIb-IX-V. Also acts as a chaperone for coagulation factor VIII, delivering it to the site of injury, stabilizing its heterodimeric structure and protecting it from premature clearance from plasma. The polypeptide is von Willebrand factor (Rattus norvegicus (Rat)).